A 532-amino-acid chain; its full sequence is Light-independent protochlorophyllide reductase subunit B (532 aa).

A [4Fe-4S] cluster-binding site is contributed by D36. The active-site Proton donor is D282. Residue 417–418 (GL) participates in substrate binding.

Belongs to the ChlB/BchB/BchZ family. In terms of assembly, protochlorophyllide reductase is composed of three subunits; BchL, BchN and BchB. Forms a heterotetramer of two BchB and two BchN subunits. The cofactor is [4Fe-4S] cluster.

The enzyme catalyses chlorophyllide a + oxidized 2[4Fe-4S]-[ferredoxin] + 2 ADP + 2 phosphate = protochlorophyllide a + reduced 2[4Fe-4S]-[ferredoxin] + 2 ATP + 2 H2O. It participates in porphyrin-containing compound metabolism; bacteriochlorophyll biosynthesis (light-independent). Component of the dark-operative protochlorophyllide reductase (DPOR) that uses Mg-ATP and reduced ferredoxin to reduce ring D of protochlorophyllide (Pchlide) to form chlorophyllide a (Chlide). This reaction is light-independent. The NB-protein (BchN-BchB) is the catalytic component of the complex. This chain is Light-independent protochlorophyllide reductase subunit B, found in Methylobacterium radiotolerans (strain ATCC 27329 / DSM 1819 / JCM 2831 / NBRC 15690 / NCIMB 10815 / 0-1).